Here is a 359-residue protein sequence, read N- to C-terminus: Anhydro-N-acetylmuramic acid kinase (359 aa).

Residue 12-19 (GTSLDGVD) coordinates ATP.

Belongs to the anhydro-N-acetylmuramic acid kinase family.

The catalysed reaction is 1,6-anhydro-N-acetyl-beta-muramate + ATP + H2O = N-acetyl-D-muramate 6-phosphate + ADP + H(+). Its pathway is amino-sugar metabolism; 1,6-anhydro-N-acetylmuramate degradation. It participates in cell wall biogenesis; peptidoglycan recycling. Its function is as follows. Catalyzes the specific phosphorylation of 1,6-anhydro-N-acetylmuramic acid (anhMurNAc) with the simultaneous cleavage of the 1,6-anhydro ring, generating MurNAc-6-P. Is required for the utilization of anhMurNAc either imported from the medium or derived from its own cell wall murein, and thus plays a role in cell wall recycling. This Sulfurovum sp. (strain NBC37-1) protein is Anhydro-N-acetylmuramic acid kinase.